The sequence spans 138 residues: Flagellar basal body rod protein FlgB (138 aa).

This sequence belongs to the flagella basal body rod proteins family. In terms of assembly, the basal body constitutes a major portion of the flagellar organelle and consists of a number of rings mounted on a central rod. In Gram-negative bacteria, at least four rings, L, P, S and M are present, whereas Gram-positive bacteria lack the L and P rings. The rod consists of about 26 subunits of FlgG in the distal portion, and FlgB, FlgC and FlgF build up the proximal portion of the rod with about 6 subunits each. Rod assembly occurs by export via the flagellum-specific pathway of its constituent proteins and by their incorporation into the rod structure in the probable order of FlgB, FlgC, FlgF and FlgG. Another protein, FliE, also assembles onto the stable rod structure.

The protein resides in the bacterial flagellum basal body. In terms of biological role, structural component of flagellum, the bacterial motility apparatus. Part of the rod structure of flagellar basal body. In Escherichia coli (strain K12), this protein is Flagellar basal body rod protein FlgB (flgB).